The primary structure comprises 308 residues: Mitochondrial import receptor subunit TOM40B (308 aa).

Residues Met-1 to Ser-29 are disordered. A required for mitochondrial targeting region spans residues Pro-281–Gly-308.

The protein belongs to the Tom40 family. Forms part of the preprotein translocase of the outer mitochondrial membrane (TOM complex) containing TOMM22, TOMM40, TOMM40L and TOMM70. Interacts with mitochondrial targeting sequences.

Its subcellular location is the mitochondrion outer membrane. Potential channel-forming protein implicated in import of protein precursors into mitochondria. The sequence is that of Mitochondrial import receptor subunit TOM40B (Tomm40l) from Mus musculus (Mouse).